Consider the following 594-residue polypeptide: Protein FAM200C (594 aa).

In Homo sapiens (Human), this protein is Protein FAM200C.